We begin with the raw amino-acid sequence, 100 residues long: UPF0473 protein LMHCC_1068 (100 aa).

This sequence belongs to the UPF0473 family.

This is UPF0473 protein LMHCC_1068 from Listeria monocytogenes serotype 4a (strain HCC23).